The sequence spans 569 residues: WD repeat-containing protein 20 (569 aa).

Alanine 2 bears the N-acetylalanine mark. 7 WD repeats span residues 94 to 138 (RIYK…KETS), 139 to 210 (KLFN…KSTR), 211 to 252 (NPLL…FDSV), 253 to 331 (ELHG…SGSD), 332 to 426 (EDFQ…NSVP), 427 to 523 (PPLP…VPLL), and 524 to 559 (EPLICKKIAHERLTVLIFLEDCIVTACQEGFICTWG). Serine 357 and serine 360 each carry phosphoserine. Polar residues-rich tracts occupy residues 405–423 (NATSPPAGSNGNSVTTPGN) and 431–445 (RSNSLPHSAVSNAGS). The disordered stretch occupies residues 405–445 (NATSPPAGSNGNSVTTPGNSVPPPLPRSNSLPHSAVSNAGS). Phosphoserine is present on residues serine 432, serine 434, and serine 465. Residues 450–468 (MDGAIASGVSKFATLSLHD) form a mediates XPO1-dependent nuclear export of WDR20-USP12 complexes region.

As to quaternary structure, interacts with USP12; promotes translocation of USP12/WDR20 to the plasma membrane. Component of the USP12/WDR20/WDR48 deubiquitinating complex. Interacts with USP46; contributes to the cytoplasmic localization of the USP46/WDR20 complex. Component of the USP12/DMWD/WDR48 deubiquitinating complex.

It is found in the cytoplasm. Its subcellular location is the nucleus. Regulator of deubiquitinating complexes. Activates deubiquitinating activity of complexes containing USP12. Anchors at the base of the ubiquitin-contacting loop of USP12 and remotely modulates the catalytic center of the enzyme. Regulates shuttling of the USP12 deubiquitinase complex between the plasma membrane, cytoplasm and nucleus. This Homo sapiens (Human) protein is WD repeat-containing protein 20 (WDR20).